A 62-amino-acid polypeptide reads, in one-letter code: Protein CYSTEINE-RICH TRANSMEMBRANE MODULE 2 (62 aa).

2 helical membrane-spanning segments follow: residues 23-39 and 33-53; these read VAVAATRSASVVAAAFD and VVAAAFDFYICIIISTLLSLI.

Belongs to the CYSTM1 family. Heterodimers. Binds weakly to CYSTM7 and WIH1/CYSTM13. In terms of tissue distribution, mostly expressed in stems, siliques, leaves and flowers and, to a lower extent, in roots.

It localises to the cell membrane. It is found in the nucleus. The protein localises to the secreted. Its subcellular location is the cell wall. Its function is as follows. Involved in resistance to abiotic stress. Confers resistance to heavy metal ions (e.g. cadmium (CdCl(2)) and copper (CuCl(2))) by chelating them at the plasma membrane of root cells, thus stopping their entry and reducing their accumulation. In Arabidopsis thaliana (Mouse-ear cress), this protein is Protein CYSTEINE-RICH TRANSMEMBRANE MODULE 2.